Reading from the N-terminus, the 472-residue chain is Adenosylhomocysteinase (472 aa).

Positions 62, 137, and 197 each coordinate substrate. 198-200 (TTT) serves as a coordination point for NAD(+). Substrate is bound by residues Lys-227 and Asp-231. Residues Asn-232, 261–266 (GYGDVG), Glu-284, Asn-319, 340–342 (IGH), and Asn-385 each bind NAD(+).

It belongs to the adenosylhomocysteinase family. It depends on NAD(+) as a cofactor.

Its subcellular location is the cytoplasm. The catalysed reaction is S-adenosyl-L-homocysteine + H2O = L-homocysteine + adenosine. It participates in amino-acid biosynthesis; L-homocysteine biosynthesis; L-homocysteine from S-adenosyl-L-homocysteine: step 1/1. Functionally, may play a key role in the regulation of the intracellular concentration of adenosylhomocysteine. The chain is Adenosylhomocysteinase from Bordetella pertussis (strain Tohama I / ATCC BAA-589 / NCTC 13251).